A 409-amino-acid polypeptide reads, in one-letter code: Inactive serine protease 35 (409 aa).

A signal peptide spans 1 to 17 (MLLWLIFFTPGWTLIDG). 2 N-linked (GlcNAc...) asparagine glycosylation sites follow: N87 and N107. One can recognise a Peptidase S1 domain in the interval 120 to 404 (VYGTDSRFSI…ICLWIHGNDA (285 aa)). A disulfide bond links C150 and C166. Over residues 188-203 (RNKSGGKKRRGSKRSR) the composition is skewed to basic residues. The segment at 188–246 (RNKSGGKKRRGSKRSRRETSGGDQREGPREHLQDRVKAGRRRKQSGGGQRVSEGRPSFR) is disordered. Residues 204-224 (RETSGGDQREGPREHLQDRVK) show a composition bias toward basic and acidic residues.

Belongs to the peptidase S1 family.

The protein localises to the secreted. In Macaca mulatta (Rhesus macaque), this protein is Inactive serine protease 35 (PRSS35).